We begin with the raw amino-acid sequence, 216 residues long: MSTHVICDFDGTITEEDNIIALMRRFAPPEWVELKDSVLNQTLSIREGVGQMFSLLPSNQQERYREFLQSTITLRAGFVEFLQETQSHGFRFDVVSGGMDFFVHPILEGHVAPEHIFCNHVDFSGETARVTWPHACDVHCLNDCGCCKPTIARQIVSPTDTLIVIGDSVTDFEIAKRADVVYARGQLISLCEAEGIRHVPFETFYDISAYMKGVNV.

It belongs to the HAD-like hydrolase superfamily. MtnX family.

The enzyme catalyses 2-hydroxy-5-methylsulfanyl-3-oxopent-1-enyl phosphate + H2O = 1,2-dihydroxy-5-(methylsulfanyl)pent-1-en-3-one + phosphate. Its pathway is amino-acid biosynthesis; L-methionine biosynthesis via salvage pathway; L-methionine from S-methyl-5-thio-alpha-D-ribose 1-phosphate: step 4/6. Its function is as follows. Dephosphorylates 2-hydroxy-3-keto-5-methylthiopentenyl-1-phosphate (HK-MTPenyl-1-P) yielding 1,2-dihydroxy-3-keto-5-methylthiopentene (DHK-MTPene). This chain is 2-hydroxy-3-keto-5-methylthiopentenyl-1-phosphate phosphatase, found in Exiguobacterium sp. (strain ATCC BAA-1283 / AT1b).